We begin with the raw amino-acid sequence, 893 residues long: MTSKVVAAAASAFLSRTNELGNLQKSCIRILSFCESNSSRIGLHIHCPVIKFGLLENLDLCNNLLSLYLKTDGIWNARKLFDEMSHRTVFAWTVMISAFTKSQEFASALSLFEEMMASGTHPNEFTFSSVVRSCAGLRDISYGGRVHGSVIKTGFEGNSVVGSSLSDLYSKCGQFKEACELFSSLQNADTISWTMMISSLVGARKWREALQFYSEMVKAGVPPNEFTFVKLLGASSFLGLEFGKTIHSNIIVRGIPLNVVLKTSLVDFYSQFSKMEDAVRVLNSSGEQDVFLWTSVVSGFVRNLRAKEAVGTFLEMRSLGLQPNNFTYSAILSLCSAVRSLDFGKQIHSQTIKVGFEDSTDVGNALVDMYMKCSASEVEASRVFGAMVSPNVVSWTTLILGLVDHGFVQDCFGLLMEMVKREVEPNVVTLSGVLRACSKLRHVRRVLEIHAYLLRRHVDGEMVVGNSLVDAYASSRKVDYAWNVIRSMKRRDNITYTSLVTRFNELGKHEMALSVINYMYGDGIRMDQLSLPGFISASANLGALETGKHLHCYSVKSGFSGAASVLNSLVDMYSKCGSLEDAKKVFEEIATPDVVSWNGLVSGLASNGFISSALSAFEEMRMKETEPDSVTFLILLSACSNGRLTDLGLEYFQVMKKIYNIEPQVEHYVHLVGILGRAGRLEEATGVVETMHLKPNAMIFKTLLRACRYRGNLSLGEDMANKGLALAPSDPALYILLADLYDESGKPELAQKTRNLMTEKRLSKKLGKSTVEVQGKVHSFVSEDVTRVDKTNGIYAEIESIKEEIKRFGSPYRGNENASFHSAKQAVVYGFIYASPEAPVHVVKNKILCKDCHEFVSILTRLVDKKITVRDGNQVHIFKNGECSCKREETSFV.

19 PPR repeats span residues 57-87 (NLDL…MSHR), 88-122 (TVFA…GTHP), 123-157 (NEFT…GFEG), 158-188 (NSVV…LQNA), 189-223 (DTIS…GVPP), 224-257 (NEFT…GIPL), 258-288 (NVVL…SGEQ), 289-323 (DVFL…GLQP), 324-358 (NNFT…GFED), 359-390 (STDV…MVSP), 391-425 (NVVS…EVEP), 426-460 (NVVT…HVDG), 461-491 (EMVV…MKRR), 492-526 (DNIT…GIRM), 527-561 (DQLS…GFSG), 562-592 (AASV…IATP), 593-627 (DVVS…ETEP), 628-658 (DSVT…MKKI), and 664-694 (QVEH…MHLK). Residues 699 to 774 (IFKTLLRACR…KLGKSTVEVQ (76 aa)) form a type E motif region. Residues 775 to 806 (GKVHSFVSEDVTRVDKTNGIYAEIESIKEEIK) form a type E(+) motif region. Positions 807–893 (RFGSPYRGNE…SCKREETSFV (87 aa)) are type DYW motif.

This sequence belongs to the PPR family. PCMP-H subfamily.

The protein resides in the plastid. It is found in the chloroplast. This Arabidopsis thaliana (Mouse-ear cress) protein is Pentatricopeptide repeat-containing protein At5g52850, chloroplastic (PCMP-H31).